Consider the following 156-residue polypeptide: Organelle RRM domain-containing protein 2, mitochondrial (156 aa).

The transit peptide at 1 to 28 (MAMAMRLPAISRAVTEVASAPVGLRRLF) directs the protein to the mitochondrion. The 79-residue stretch at 56 to 134 (TNLFVSGLSK…WVIFAEYARP (79 aa)) folds into the RRM domain. Residue Ser-64 is modified to Phosphoserine. Residues 137–148 (QSQSYQPQNNMS) show a composition bias toward polar residues. The interval 137–156 (QSQSYQPQNNMSRPPYYGNR) is disordered.

Interacts with RBG3/ORRM3. Binds to RBG2/ORRM5.

Its subcellular location is the mitochondrion. Involved in C-to-U editing of mitochondrial RNA. Functions as minor mitochondrial editing factor. Controls 6 percent of the mitochondrial editing sites. In Arabidopsis thaliana (Mouse-ear cress), this protein is Organelle RRM domain-containing protein 2, mitochondrial.